Here is a 57-residue protein sequence, read N- to C-terminus: UPF0391 membrane protein bsl6560 (57 aa).

2 helical membrane passes run 4–24 (WVVTFLVIALIAGILGFGGIA) and 30–50 (IAKIIFFIAVVLFLVSAVVGL).

It belongs to the UPF0391 family.

The protein localises to the cell membrane. The polypeptide is UPF0391 membrane protein bsl6560 (Bradyrhizobium diazoefficiens (strain JCM 10833 / BCRC 13528 / IAM 13628 / NBRC 14792 / USDA 110)).